We begin with the raw amino-acid sequence, 130 residues long: Albumin-1 F (130 aa).

The N-terminal stretch at Met1–Ala26 is a signal peptide. 3 disulfide bridges follow: Cys29–Cys46, Cys33–Cys48, and Cys41–Cys58. 2 propeptides span residues Val64–Asn69 and Leu123–Ala130.

In terms of processing, the C-terminal glycine may be removed from PA1b.

PA1b binds to basic 7S globulin (BG) and stimulates its phosphorylation activity. Involved in the signal transduction system to regulate the growth and differentiation as a hormone peptide. Toxic to various insects through binding to a high affinity binding site in the insect gut. The protein is Albumin-1 F of Pisum sativum (Garden pea).